Reading from the N-terminus, the 869-residue chain is Bifunctional uridylyltransferase/uridylyl-removing enzyme (869 aa).

A uridylyltransferase region spans residues 1 to 332; the sequence is MTDTPAERPD…QFDGEATPEP (332 aa). A uridylyl-removing region spans residues 333–691; sequence LGGGFSLRRG…RRAVPDNDAL (359 aa). The region spanning 450-572 is the HD domain; the sequence is VDQHTLMVLR…VGTRERLDYL (123 aa). ACT domains lie at 692 to 774 and 798 to 869; these read EVFV…RAVP and RISL…LDPV.

Belongs to the GlnD family. The cofactor is Mg(2+).

The enzyme catalyses [protein-PII]-L-tyrosine + UTP = [protein-PII]-uridylyl-L-tyrosine + diphosphate. It catalyses the reaction [protein-PII]-uridylyl-L-tyrosine + H2O = [protein-PII]-L-tyrosine + UMP + H(+). With respect to regulation, uridylyltransferase (UTase) activity is inhibited by glutamine, while glutamine activates uridylyl-removing (UR) activity. In terms of biological role, modifies, by uridylylation and deuridylylation, the PII regulatory proteins (GlnB and homologs), in response to the nitrogen status of the cell that GlnD senses through the glutamine level. Under low glutamine levels, catalyzes the conversion of the PII proteins and UTP to PII-UMP and PPi, while under higher glutamine levels, GlnD hydrolyzes PII-UMP to PII and UMP (deuridylylation). Thus, controls uridylylation state and activity of the PII proteins, and plays an important role in the regulation of nitrogen assimilation and metabolism. The protein is Bifunctional uridylyltransferase/uridylyl-removing enzyme of Xanthomonas euvesicatoria pv. vesicatoria (strain 85-10) (Xanthomonas campestris pv. vesicatoria).